The chain runs to 435 residues: Shikimate O-hydroxycinnamoyltransferase (435 aa).

Catalysis depends on proton acceptor residues His-153 and Asp-382.

The protein belongs to the plant acyltransferase family. In terms of tissue distribution, highly expressed in stem vascular tissues.

The enzyme catalyses shikimate + 4-coumaroyl-CoA = trans-4-coumaroylshikimate + CoA. Its function is as follows. Acyltransferase involved in the biosynthesis of lignin. The affinity for shikimate as acceptor is 100-fold higher than for quinate. The most efficient donors are caffeoyl-CoA &gt; p-coumaroyl-CoA &gt; feruloyl-CoA &gt;&gt; sinapoyl-CoA. This chain is Shikimate O-hydroxycinnamoyltransferase (HST), found in Nicotiana tabacum (Common tobacco).